The chain runs to 143 residues: Nucleoside diphosphate kinase (143 aa).

6 residues coordinate ATP: K11, F59, R87, T93, R104, and N114. Residue H117 is the Pros-phosphohistidine intermediate of the active site.

The protein belongs to the NDK family. In terms of assembly, homotetramer. The cofactor is Mg(2+).

The protein resides in the cytoplasm. It catalyses the reaction a 2'-deoxyribonucleoside 5'-diphosphate + ATP = a 2'-deoxyribonucleoside 5'-triphosphate + ADP. The enzyme catalyses a ribonucleoside 5'-diphosphate + ATP = a ribonucleoside 5'-triphosphate + ADP. Major role in the synthesis of nucleoside triphosphates other than ATP. The ATP gamma phosphate is transferred to the NDP beta phosphate via a ping-pong mechanism, using a phosphorylated active-site intermediate. This Shewanella woodyi (strain ATCC 51908 / MS32) protein is Nucleoside diphosphate kinase.